Reading from the N-terminus, the 30-residue chain is Trypsin inhibitor 7 (30 aa).

Disulfide bonds link Cys4-Cys21, Cys11-Cys23, and Cys17-Cys29.

This sequence belongs to the protease inhibitor I7 (squash-type serine protease inhibitor) family.

It is found in the secreted. Strongly inhibits trypsin, weakly inhibits chymotrypsin. The sequence is that of Trypsin inhibitor 7 from Cyclanthera pedata (Achocha).